We begin with the raw amino-acid sequence, 334 residues long: Malate dehydrogenase, cytoplasmic (334 aa).

At serine 2 the chain carries N-acetylserine. NAD(+) is bound by residues glycine 11–alanine 17 and aspartate 42. Substrate is bound by residues arginine 92 and arginine 98. Residue asparagine 105 coordinates NAD(+). At lysine 110 the chain carries N6-succinyllysine. Residue glutamine 112 participates in NAD(+) binding. N6-acetyllysine occurs at positions 118 and 121. Valine 129–asparagine 131 contacts NAD(+). Residues asparagine 131 and arginine 162 each contribute to the substrate site. The Proton acceptor role is filled by histidine 187. Lysine 214 is subject to N6-succinyllysine. A Phosphoserine modification is found at serine 217. Omega-N-methylarginine is present on arginine 230. Serine 241 is modified (phosphoserine). N6-acetyllysine; alternate is present on lysine 298. Lysine 298 carries the post-translational modification N6-succinyllysine; alternate. Serine 309 bears the Phosphoserine mark. Lysine 318 is subject to N6-succinyllysine. Phosphoserine occurs at positions 332 and 333.

This sequence belongs to the LDH/MDH superfamily. MDH type 2 family. In terms of assembly, homodimer. Post-translationally, ISGylated. Acetylation at Lys-118 dramatically enhances enzymatic activity and promotes adipogenic differentiation.

It is found in the cytoplasm. The protein resides in the cytosol. It catalyses the reaction (S)-malate + NAD(+) = oxaloacetate + NADH + H(+). The enzyme catalyses (2R)-2-hydroxy-3-(4-hydroxyphenyl)propanoate + NAD(+) = 3-(4-hydroxyphenyl)pyruvate + NADH + H(+). It carries out the reaction (S)-2-hydroxyglutarate + NAD(+) = 2-oxoglutarate + NADH + H(+). Its function is as follows. Catalyzes the reduction of aromatic alpha-keto acids in the presence of NADH. Plays essential roles in the malate-aspartate shuttle and the tricarboxylic acid cycle, important in mitochondrial NADH supply for oxidative phosphorylation. Catalyzes the reduction of 2-oxoglutarate to 2-hydroxyglutarate, leading to elevated reactive oxygen species (ROS). The polypeptide is Malate dehydrogenase, cytoplasmic (Mdh1) (Rattus norvegicus (Rat)).